The chain runs to 407 residues: Tryptophan synthase beta chain (407 aa).

The residue at position 91 (Lys-91) is an N6-(pyridoxal phosphate)lysine.

Belongs to the TrpB family. In terms of assembly, tetramer of two alpha and two beta chains. It depends on pyridoxal 5'-phosphate as a cofactor.

The catalysed reaction is (1S,2R)-1-C-(indol-3-yl)glycerol 3-phosphate + L-serine = D-glyceraldehyde 3-phosphate + L-tryptophan + H2O. Its pathway is amino-acid biosynthesis; L-tryptophan biosynthesis; L-tryptophan from chorismate: step 5/5. In terms of biological role, the beta subunit is responsible for the synthesis of L-tryptophan from indole and L-serine. This Streptococcus pneumoniae (strain Hungary19A-6) protein is Tryptophan synthase beta chain.